A 400-amino-acid chain; its full sequence is Probable peptidoglycan glycosyltransferase FtsW (400 aa).

Residues 1–24 (MSTGSLPLGLPSRDSLDGLRNSVD) lie on the Cytoplasmic side of the membrane. The helical transmembrane segment at 25-45 (LPLLAAAALLLGLGLIMVASA) threads the bilayer. Residues 46–63 (SMDLGERYYGNTWHFFQR) are Periplasmic-facing. The helical transmembrane segment at 64–84 (QVLFAAIGLALATVMWAIPLE) threads the bilayer. The Cytoplasmic portion of the chain corresponds to 85–88 (RWER). Residues 89–109 (AGPWLLILVMVLLIAVLLPGV) form a helical membrane-spanning segment. Topologically, residues 110–118 (GRTVNGATR) are periplasmic. A helical membrane pass occupies residues 119-139 (WIPIGMFNLQVAEPVKLLVVM). Residues 140-153 (YLAGYIVRHYSALR) are Cytoplasmic-facing. Residues 154 to 174 (LHLRGFVRPLVVLGFGTVLLL) form a helical membrane-spanning segment. The Periplasmic segment spans residues 175-177 (LQP). The chain crosses the membrane as a helical span at residues 178 to 198 (DFGGAAIMLAIGMGMLFLAGA). A topological domain (cytoplasmic) is located at residue K199. Residues 200–220 (LWQFAALGATIAVGMAFVAVA) traverse the membrane as a helical segment. Over 221 to 278 (APYRVARLTAFLDPWQDPFATGFQLTQSLIAIGSGGWFGTGLGNSVQKLFYLPEAHND) the chain is Periplasmic. Residues 279 to 299 (FLFAVFAEEFGFIGVLALIAL) traverse the membrane as a helical segment. The Cytoplasmic portion of the chain corresponds to 300–324 (FAVVVWRCVKIGLWAERAGHAFGSH). The chain crosses the membrane as a helical span at residues 325–345 (LAFGVAIWLALQSALNLAVNM). The Periplasmic portion of the chain corresponds to 346–354 (GLLPTKGMT). A helical transmembrane segment spans residues 355 to 375 (LPFLSYGGSSLIVTLMAIGLV). Over 376–400 (MRVYREAQIPAPRQSTPPRRKRGQA) the chain is Cytoplasmic.

It belongs to the SEDS family. FtsW subfamily.

It is found in the cell inner membrane. It catalyses the reaction [GlcNAc-(1-&gt;4)-Mur2Ac(oyl-L-Ala-gamma-D-Glu-L-Lys-D-Ala-D-Ala)](n)-di-trans,octa-cis-undecaprenyl diphosphate + beta-D-GlcNAc-(1-&gt;4)-Mur2Ac(oyl-L-Ala-gamma-D-Glu-L-Lys-D-Ala-D-Ala)-di-trans,octa-cis-undecaprenyl diphosphate = [GlcNAc-(1-&gt;4)-Mur2Ac(oyl-L-Ala-gamma-D-Glu-L-Lys-D-Ala-D-Ala)](n+1)-di-trans,octa-cis-undecaprenyl diphosphate + di-trans,octa-cis-undecaprenyl diphosphate + H(+). It functions in the pathway cell wall biogenesis; peptidoglycan biosynthesis. In terms of biological role, peptidoglycan polymerase that is essential for cell division. The chain is Probable peptidoglycan glycosyltransferase FtsW from Thioalkalivibrio sp. (strain K90mix).